Consider the following 277-residue polypeptide: Putative thiosulfate sulfurtransferase mpst-4 (277 aa).

Rhodanese domains lie at 15–153 (NFGN…VVQS) and 155–243 (SKAE…QHLN). Residue Cys204 is the Cysteine persulfide intermediate of the active site.

The catalysed reaction is thiosulfate + hydrogen cyanide = thiocyanate + sulfite + 2 H(+). The sequence is that of Putative thiosulfate sulfurtransferase mpst-4 from Caenorhabditis elegans.